The primary structure comprises 426 residues: Serine protease HTRA2, mitochondrial (426 aa).

Over residues S31–N58 the composition is skewed to low complexity. A disordered region spans residues S31–D59. The helical transmembrane segment at F71–G87 threads the bilayer. Residues A79–S82 carry the IAP-binding motif. A serine protease region spans residues S143–L306. Catalysis depends on charge relay system residues H161, D193, and S270. In terms of domain architecture, PDZ spans M329–V414.

This sequence belongs to the peptidase S1C family. As to quaternary structure, interacts with th/DIAP1 (via BIR 2 domain).

Its subcellular location is the mitochondrion intermembrane space. It is found in the mitochondrion membrane. It carries out the reaction Cleavage of non-polar aliphatic amino-acids at the P1 position, with a preference for Val, Ile and Met. At the P2 and P3 positions, Arg is selected most strongly with a secondary preference for other hydrophilic residues.. In terms of biological role, serine protease that shows proteolytic activity against a non-specific substrate beta-casein. Promotes or induces cell death either by direct binding to and inhibition of BIRC proteins (also called inhibitor of apoptosis proteins, IAPs), leading to an increase in caspase activity, or by a BIRC inhibition-independent, caspase-independent and serine protease activity-dependent mechanism. Can antagonize antiapoptotic activity of th/Diap1 by directly inducing the degradation of th/Diap1. In Drosophila grimshawi (Hawaiian fruit fly), this protein is Serine protease HTRA2, mitochondrial.